The primary structure comprises 46 residues: Cytochrome b559 subunit beta (46 aa).

Residues 21–37 (WLALHTLGIPTVFFLGA) form a helical membrane-spanning segment. Histidine 25 contributes to the heme binding site.

The protein belongs to the PsbE/PsbF family. Heterodimer of an alpha subunit and a beta subunit. PSII is composed of 1 copy each of membrane proteins PsbA, PsbB, PsbC, PsbD, PsbE, PsbF, PsbH, PsbI, PsbJ, PsbK, PsbL, PsbM, PsbT, PsbX, PsbY, PsbZ, Psb30/Ycf12, peripheral proteins PsbO, CyanoQ (PsbQ), PsbU, PsbV and a large number of cofactors. It forms dimeric complexes. Heme b serves as cofactor.

Its subcellular location is the cellular thylakoid membrane. This b-type cytochrome is tightly associated with the reaction center of photosystem II (PSII). PSII is a light-driven water:plastoquinone oxidoreductase that uses light energy to abstract electrons from H(2)O, generating O(2) and a proton gradient subsequently used for ATP formation. It consists of a core antenna complex that captures photons, and an electron transfer chain that converts photonic excitation into a charge separation. In Synechococcus sp. (strain CC9605), this protein is Cytochrome b559 subunit beta.